The following is a 218-amino-acid chain: MGILFSHCSGGREKEDKISKTDRAVLNLKIQRDKLKNYQTQVLEIAIAKECSKAGKKNQALLALKKKKYQEKMLDESFANLQNIEELIANVEQAEIQVRIFESLKQGNESLKEIQKEMSLEDVENLMEETAEAIQYQNDISEALSGKFSKEEEDDLLNELDEMEKQLNAQQYPKVPETQLPKIELPIEDAIEEGKQRKSTTNGLNHILIIACIINHIF.

Coiled coils occupy residues 15 to 42 (EDKISKTDRAVLNLKIQRDKLKNYQTQV) and 70 to 172 (QEKM…AQQY).

The protein belongs to the SNF7 family. In terms of assembly, probable core component of the endosomal sorting required for transport complex III (ESCRT-III).

The protein resides in the endosome membrane. Functionally, probable core component of the endosomal sorting required for transport complex III (ESCRT-III) which is involved in multivesicular bodies (MVBs) formation and sorting of endosomal cargo proteins into MVBs. MVBs contain intraluminal vesicles (ILVs) that are generated by invagination and scission from the limiting membrane of the endosome and are delivered to lysosomes enabling degradation of membrane proteins. This chain is Charged multivesicular body protein 6 (chmp6), found in Dictyostelium discoideum (Social amoeba).